Here is a 77-residue protein sequence, read N- to C-terminus: Large ribosomal subunit protein uL29 (77 aa).

Belongs to the universal ribosomal protein uL29 family.

This Cutibacterium acnes (strain DSM 16379 / KPA171202) (Propionibacterium acnes) protein is Large ribosomal subunit protein uL29.